Reading from the N-terminus, the 570-residue chain is Dihydroxy-acid dehydratase (570 aa).

Cysteine 61 is a [2Fe-2S] cluster binding site. Aspartate 94 is a binding site for Mg(2+). Cysteine 135 is a [2Fe-2S] cluster binding site. Mg(2+)-binding residues include aspartate 136 and lysine 137. Lysine 137 carries the N6-carboxylysine modification. Cysteine 207 is a [2Fe-2S] cluster binding site. Residue glutamate 459 coordinates Mg(2+). Serine 485 acts as the Proton acceptor in catalysis.

The protein belongs to the IlvD/Edd family. In terms of assembly, homodimer. It depends on [2Fe-2S] cluster as a cofactor. Requires Mg(2+) as cofactor.

It carries out the reaction (2R)-2,3-dihydroxy-3-methylbutanoate = 3-methyl-2-oxobutanoate + H2O. The catalysed reaction is (2R,3R)-2,3-dihydroxy-3-methylpentanoate = (S)-3-methyl-2-oxopentanoate + H2O. Its pathway is amino-acid biosynthesis; L-isoleucine biosynthesis; L-isoleucine from 2-oxobutanoate: step 3/4. The protein operates within amino-acid biosynthesis; L-valine biosynthesis; L-valine from pyruvate: step 3/4. Functions in the biosynthesis of branched-chain amino acids. Catalyzes the dehydration of (2R,3R)-2,3-dihydroxy-3-methylpentanoate (2,3-dihydroxy-3-methylvalerate) into 2-oxo-3-methylpentanoate (2-oxo-3-methylvalerate) and of (2R)-2,3-dihydroxy-3-methylbutanoate (2,3-dihydroxyisovalerate) into 2-oxo-3-methylbutanoate (2-oxoisovalerate), the penultimate precursor to L-isoleucine and L-valine, respectively. This chain is Dihydroxy-acid dehydratase, found in Lactococcus lactis subsp. cremoris (strain MG1363).